A 161-amino-acid chain; its full sequence is Nucleotide-binding protein HCH_04620 (161 aa).

The protein belongs to the YajQ family.

Functionally, nucleotide-binding protein. This Hahella chejuensis (strain KCTC 2396) protein is Nucleotide-binding protein HCH_04620.